A 175-amino-acid chain; its full sequence is Glutamyl-tRNA(Gln) amidotransferase subunit F, mitochondrial (175 aa).

The N-terminal 19 residues, 1–19 (MLKVSARHAPVLRLPRRFY), are a transit peptide targeting the mitochondrion.

This sequence belongs to the GatF family. Subunit of the heterotrimeric GatFAB amidotransferase (AdT) complex, composed of A, B and F subunits.

The protein resides in the mitochondrion inner membrane. It catalyses the reaction L-glutamyl-tRNA(Gln) + L-glutamine + ATP + H2O = L-glutaminyl-tRNA(Gln) + L-glutamate + ADP + phosphate + H(+). Functionally, allows the formation of correctly charged Gln-tRNA(Gln) through the transamidation of misacylated Glu-tRNA(Gln) in the mitochondria. The reaction takes place in the presence of glutamine and ATP through an activated gamma-phospho-Glu-tRNA(Gln). Required for proper protein synthesis within the mitochondrion. The sequence is that of Glutamyl-tRNA(Gln) amidotransferase subunit F, mitochondrial from Lachancea thermotolerans (strain ATCC 56472 / CBS 6340 / NRRL Y-8284) (Yeast).